Here is a 956-residue protein sequence, read N- to C-terminus: F-box only protein 10 (956 aa).

An F-box domain is found at 1–48 (MEAGGLPLELWRMILAYLHLPDLGRCSLVCRAWYELILSLDSTRWRQL). PbH1 repeat units follow at residues 198–217 (SGHV…QVHG) and 238–260 (VPLC…TVEG). The tract at residues 314–367 (EGSQSPTSPASSSPKPGSKAGSQEAEVGSDGERVAQTPDSSDGGLSPSGEDEDE) is disordered. Low complexity-rich tracts occupy residues 316-336 (SQSP…AGSQ) and 351-361 (PDSSDGGLSPS). Phosphoserine occurs at positions 321 and 326. PbH1 repeat units follow at residues 427–448 (VQGC…FVCS), 449–470 (HGRA…RCIH), 471–493 (NSKI…FLRL), 494–516 (EGGG…DIRK), 538–560 (LGNG…GIYI), 561–583 (LYHG…GIAV), 584–606 (NENG…GVDI), 607–629 (RRGG…GVVV), 630–652 (GDEG…GVWM), 653–675 (MSSS…GVAV), 717–739 (RPIT…GLYV), 740–762 (QSSE…GITV), 764–786 (QSSQ…GVKV), 787–809 (EAQC…GIIT), and 832–854 (LPRS…GIAV).

As to quaternary structure, component of the SCF(FBXO10) complex consisting of CUL1, SKP1 and FBXO10. Interacts with BCL2. Interacts with PRDM1.

The protein resides in the cytoplasm. The protein operates within protein modification; protein ubiquitination. Substrate-recognition component of the SCF (SKP1-CUL1-F-box protein)-type E3 ubiquitin ligase complex. Mediates the ubiquitination and degradation of BCL2, an antiapoptotic protein, thereby playing a role in apoptosis by controlling the stability of BCL2. Targets also the receptor for advanced glycation end products RAGE for ubiquitination and subsequent lysosomal degradation. Directly controls HGAL/GCSAM ubiquitination and degradation and thereby decreases BCR signaling. The polypeptide is F-box only protein 10 (FBXO10) (Homo sapiens (Human)).